We begin with the raw amino-acid sequence, 224 residues long: Ribonuclease HII (224 aa).

Positions 17–201 constitute an RNase H type-2 domain; it reads GTVIGVDEAG…VLSNLSVKKV (185 aa). 3 residues coordinate a divalent metal cation: Asp-23, Glu-24, and Asp-111.

It belongs to the RNase HII family. Mn(2+) is required as a cofactor. The cofactor is Mg(2+).

The protein localises to the cytoplasm. It catalyses the reaction Endonucleolytic cleavage to 5'-phosphomonoester.. Functionally, endonuclease that specifically degrades the RNA of RNA-DNA hybrids. This is Ribonuclease HII from Pseudothermotoga lettingae (strain ATCC BAA-301 / DSM 14385 / NBRC 107922 / TMO) (Thermotoga lettingae).